We begin with the raw amino-acid sequence, 237 residues long: MRFHPPLEEGRLIRRYKRFLADIETVGGELLTIHCPNTGSMLNCQVEGGQVWFSRSNDPKRKLPGTWEVGETPQGRLFCVNTGRANALVEEALQAGVINELNGFTGLKREVAYGQEKSRIDFRLDYPTGPAYVEVKSVTLGFDGTAVAAFPDAVTERGAKHLRELAHLARDGIRAVQLYCVNLTGVEAVRPAEEIDFAYAAALREAVACGVEVLAYGVRLSHEEMVIDRRLDVLLNG.

This sequence belongs to the SfsA family.

This Pseudomonas fluorescens (strain Pf0-1) protein is Sugar fermentation stimulation protein homolog.